Here is a 581-residue protein sequence, read N- to C-terminus: Adenine deaminase (581 aa).

The protein belongs to the metallo-dependent hydrolases superfamily. Adenine deaminase family. The cofactor is Mn(2+).

It catalyses the reaction adenine + H2O + H(+) = hypoxanthine + NH4(+). This Brucella suis biovar 1 (strain 1330) protein is Adenine deaminase.